Consider the following 396-residue polypeptide: Lipopolysaccharide assembly protein B (396 aa).

Residues 1 to 20 (MIELLFLLLPIAAAYGWYMG) form a helical membrane-spanning segment. At 21–396 (RRSAKKDQDD…IKPVSNQEHN (376 aa)) the chain is on the cytoplasmic side. 4 TPR repeats span residues 35–68 (LSRD…QEIE), 77–109 (FEAE…SPNY), 149–182 (ENAL…KPQE), and 221–254 (VRAS…NPDY). The Fe cation site is built by C364, C367, C378, and C381.

Belongs to the LapB family.

The protein resides in the cell inner membrane. Functionally, modulates cellular lipopolysaccharide (LPS) levels by regulating LpxC, which is involved in lipid A biosynthesis. May act by modulating the proteolytic activity of FtsH towards LpxC. May also coordinate assembly of proteins involved in LPS synthesis at the plasma membrane. The sequence is that of Lipopolysaccharide assembly protein B from Haemophilus influenzae (strain ATCC 51907 / DSM 11121 / KW20 / Rd).